A 307-amino-acid chain; its full sequence is Auxiliary protein GraX (307 aa).

Homodimer. Interacts with GraR and GraS.

In terms of biological role, plays a role in resistance against cationic antimicrobial peptides (CAMPs). Facilitates the activation of GraS to transduce the signal to GraR. The protein is Auxiliary protein GraX (graX) of Staphylococcus aureus (strain NCTC 8325 / PS 47).